Reading from the N-terminus, the 494-residue chain is Aldehyde dehydrogenase family 7 member A1 (494 aa).

An NAD(+)-binding site is contributed by 247–252 (GSSKVG). E269 acts as the Proton acceptor in catalysis. Residue C303 is the Nucleophile of the active site.

The protein belongs to the aldehyde dehydrogenase family. As to quaternary structure, homotetramer.

The catalysed reaction is an aldehyde + NAD(+) + H2O = a carboxylate + NADH + 2 H(+). The polypeptide is Aldehyde dehydrogenase family 7 member A1 (BTG-26) (Brassica napus (Rape)).